Here is a 207-residue protein sequence, read N- to C-terminus: MRLNQNTLLLGKKVVLVPYTSEHVPSRYHEWMKSEELQRLTASEPLTLEQEYAMQCSWQEDADKCTFIVLDAEKWQAQPGATEESCMVGDVNLFLTDLEDLTLGEIEVMIAEPSCRGKGLGTEAVLAMLSYGVTTLGLTKFEAKIGQGNEPSIRMFQKLHFEQVATSSVFQEVTLRLTVSESEHQWLLEQTSHVEEKPYRDGSAEPC.

The 146-residue stretch at 35 to 180 folds into the N-acetyltransferase domain; that stretch reads EELQRLTASE…QEVTLRLTVS (146 aa).

The protein belongs to the acetyltransferase family. GNAT subfamily.

The catalysed reaction is N-terminal L-methionyl-[tubulin] + acetyl-CoA = N-terminal N(alpha)-acetyl-L-methionyl-[tubulin] + CoA + H(+). Its function is as follows. N-acetyltransferase that mediates the acetylation of the N-terminal residues of alpha- and beta-tubulin. The sequence is that of Alpha/beta-tubulin-N-acetyltransferase 9 (NAT9) from Homo sapiens (Human).